The following is a 341-amino-acid chain: Putative amino-acid ABC transporter-binding protein YhdW (341 aa).

The first 19 residues, 1 to 19, serve as a signal peptide directing secretion; it reads MKKMMIATLAAASVLLAVA.

This sequence belongs to the bacterial solute-binding protein 3 family.

Its subcellular location is the periplasm. Probably part of the binding-protein-dependent transport system YdhWXYZ for an amino acid. The polypeptide is Putative amino-acid ABC transporter-binding protein YhdW (yhdW) (Escherichia coli (strain K12)).